A 350-amino-acid polypeptide reads, in one-letter code: 2-oxoisovalerate dehydrogenase subunit beta (350 aa).

In terms of assembly, heterodimer of an alpha and a beta chain. Thiamine diphosphate serves as cofactor.

It catalyses the reaction N(6)-[(R)-lipoyl]-L-lysyl-[protein] + 3-methyl-2-oxobutanoate + H(+) = N(6)-[(R)-S(8)-2-methylpropanoyldihydrolipoyl]-L-lysyl-[protein] + CO2. Its function is as follows. The branched-chain alpha-keto dehydrogenase complex catalyzes the overall conversion of alpha-keto acids to acyl-CoA and CO(2). It contains multiple copies of three enzymatic components: branched-chain alpha-keto acid decarboxylase (E1), lipoamide acyltransferase (E2) and lipoamide dehydrogenase (E3). The protein is 2-oxoisovalerate dehydrogenase subunit beta (bkdA2) of Pseudomonas aeruginosa (strain ATCC 15692 / DSM 22644 / CIP 104116 / JCM 14847 / LMG 12228 / 1C / PRS 101 / PAO1).